Reading from the N-terminus, the 69-residue chain is Small cysteine-rich protein (69 aa).

The N-terminal stretch at 1-19 is a signal peptide; it reads MKLQLCLVLLLLGVLYVQS. A propeptide spanning residues 20–22 is cleaved from the precursor; it reads VPE.

It belongs to the Cnidaria small cysteine-rich protein (SCRiP) family. delta subfamily. In terms of processing, contains 4 disulfide bonds.

The protein localises to the secreted. The protein resides in the nematocyst. Its function is as follows. Induces neurotoxic symptoms on zebrafish. Has also been claimed to be implied in calcification, but this function seems improbable. The polypeptide is Small cysteine-rich protein (Metridium senile (Brown sea anemone)).